Here is a 267-residue protein sequence, read N- to C-terminus: Syntaxin-72 (267 aa).

At 1-244 (MPVIDIIFRV…QLVQMRSSRN (244 aa)) the chain is on the cytoplasmic side. The stretch at 53-87 (KAELASTEKNRAAAVAMNAEVRRTKARLAEDVVKL) forms a coiled coil. In terms of domain architecture, t-SNARE coiled-coil homology spans 173 to 235 (EMRRKKQDEG…KNTNVRLKKQ (63 aa)). The helical; Anchor for type IV membrane protein transmembrane segment at 245–265 (FCIDIILLCVILGIVSYIYNA) threads the bilayer. Topologically, residues 266–267 (LN) are vesicular.

The protein belongs to the syntaxin family. As to quaternary structure, part of the t-SNARE complex. In terms of tissue distribution, expressed in root, leaf, stem, flower and silique.

It is found in the membrane. Vesicle trafficking protein that functions in the secretory pathway. This is Syntaxin-72 (SYP72) from Arabidopsis thaliana (Mouse-ear cress).